The chain runs to 186 residues: GTP cyclohydrolase 1 (186 aa).

Zn(2+) is bound by residues C78, H81, and C150.

This sequence belongs to the GTP cyclohydrolase I family. As to quaternary structure, toroid-shaped homodecamer, composed of two pentamers of five dimers.

The catalysed reaction is GTP + H2O = 7,8-dihydroneopterin 3'-triphosphate + formate + H(+). Its pathway is cofactor biosynthesis; 7,8-dihydroneopterin triphosphate biosynthesis; 7,8-dihydroneopterin triphosphate from GTP: step 1/1. The sequence is that of GTP cyclohydrolase 1 from Enterococcus faecalis (strain ATCC 700802 / V583).